The following is a 66-amino-acid chain: Beta-mammal toxin Cv3 (66 aa).

Residues 1 to 66 enclose the LCN-type CS-alpha/beta domain; sequence KEGYIVNYYD…VWPLPNKTCN (66 aa). Intrachain disulfides connect C12-C65, C16-C41, C25-C46, and C29-C48.

As to expression, expressed by the venom gland.

The protein localises to the secreted. In terms of biological role, beta toxins bind voltage-independently at site-4 of sodium channels (Nav) and reduces peak current and shifts the voltage of activation toward more negative potentials thereby affecting sodium channel activation and promoting spontaneous and repetitive firing. This toxin is strongly toxic to mice. The chain is Beta-mammal toxin Cv3 from Centruroides villegasi (Scorpion).